A 108-amino-acid polypeptide reads, in one-letter code: Thiosulfate sulfurtransferase GlpE (108 aa).

Positions 17–105 constitute a Rhodanese domain; the sequence is QEKEAVLVDI…WQRQFPAEVA (89 aa). C65 serves as the catalytic Cysteine persulfide intermediate.

Belongs to the GlpE family.

It localises to the cytoplasm. It catalyses the reaction thiosulfate + hydrogen cyanide = thiocyanate + sulfite + 2 H(+). The enzyme catalyses thiosulfate + [thioredoxin]-dithiol = [thioredoxin]-disulfide + hydrogen sulfide + sulfite + 2 H(+). Its function is as follows. Transferase that catalyzes the transfer of sulfur from thiosulfate to thiophilic acceptors such as cyanide or dithiols. May function in a CysM-independent thiosulfate assimilation pathway by catalyzing the conversion of thiosulfate to sulfite, which can then be used for L-cysteine biosynthesis. This chain is Thiosulfate sulfurtransferase GlpE, found in Escherichia coli O8 (strain IAI1).